A 528-amino-acid chain; its full sequence is Glutamyl-tRNA(Gln) amidotransferase subunit A, mitochondrial (528 aa).

Lys76 functions as the Charge relay system in the catalytic mechanism. Positions 147–166 (QYREKRKQNPHSKNEDSDWL) are disordered. The active-site Charge relay system is the Ser171. The active-site Acyl-ester intermediate is the Ser195.

The protein belongs to the amidase family. GatA subfamily. In terms of assembly, subunit of the heterotrimeric GatCAB amidotransferase (AdT) complex, composed of A (QRSL1), B (GATB) and C (GATC) subunits.

The protein resides in the mitochondrion. The enzyme catalyses L-glutamyl-tRNA(Gln) + L-glutamine + ATP + H2O = L-glutaminyl-tRNA(Gln) + L-glutamate + ADP + phosphate + H(+). Its function is as follows. Allows the formation of correctly charged Gln-tRNA(Gln) through the transamidation of misacylated Glu-tRNA(Gln) in the mitochondria. The reaction takes place in the presence of glutamine and ATP through an activated gamma-phospho-Glu-tRNA(Gln). The polypeptide is Glutamyl-tRNA(Gln) amidotransferase subunit A, mitochondrial (Macaca fascicularis (Crab-eating macaque)).